Here is a 312-residue protein sequence, read N- to C-terminus: Carbonic anhydrase 4 (312 aa).

The signal sequence occupies residues 1 to 18 (MRMLLALLALSAARPSAS). The Alpha-carbonic anhydrase domain maps to 21–285 (SHWCYEVQAE…LGQRTVIKSG (265 aa)). Disulfide bonds link Cys24/Cys36 and Cys46/Cys229. His88 acts as the Proton donor/acceptor in catalysis. Zn(2+)-binding residues include His115, His117, and His140. 225–226 (TT) lines the substrate pocket. Ser284 carries the GPI-anchor amidated serine lipid modification. A propeptide spans 285–312 (GAPGRPLPWALPALLGPMLACLLAGFLR) (removed in mature form).

The protein belongs to the alpha-carbonic anhydrase family. Interacts with SLC4A4. Requires Zn(2+) as cofactor. As to expression, expressed in the endothelium of the choriocapillaris in eyes (at protein level). Not expressed in the retinal epithelium at detectable levels.

The protein localises to the cell membrane. It catalyses the reaction hydrogencarbonate + H(+) = CO2 + H2O. Its activity is regulated as follows. Activated by histamine, L-adrenaline, D-phenylalanine, L- and D-histidine. Inhibited by coumarins, saccharin, sulfonamide derivatives such as acetazolamide and Foscarnet (phosphonoformate trisodium salt). Catalyzes the reversible hydration of carbon dioxide into bicarbonate and protons and thus is essential to maintaining intracellular and extracellular pH. May stimulate the sodium/bicarbonate transporter activity of SLC4A4 that acts in pH homeostasis. It is essential for acid overload removal from the retina and retina epithelium, and acid release in the choriocapillaris in the choroid. The protein is Carbonic anhydrase 4 of Homo sapiens (Human).